The following is a 217-amino-acid chain: Imidazole glycerol phosphate synthase subunit HisH (217 aa).

The Glutamine amidotransferase type-1 domain maps to methionine 1–glutamate 212. Cysteine 79 functions as the Nucleophile in the catalytic mechanism. Active-site residues include histidine 187 and glutamate 189.

Heterodimer of HisH and HisF.

The protein localises to the cytoplasm. It catalyses the reaction 5-[(5-phospho-1-deoxy-D-ribulos-1-ylimino)methylamino]-1-(5-phospho-beta-D-ribosyl)imidazole-4-carboxamide + L-glutamine = D-erythro-1-(imidazol-4-yl)glycerol 3-phosphate + 5-amino-1-(5-phospho-beta-D-ribosyl)imidazole-4-carboxamide + L-glutamate + H(+). The enzyme catalyses L-glutamine + H2O = L-glutamate + NH4(+). It functions in the pathway amino-acid biosynthesis; L-histidine biosynthesis; L-histidine from 5-phospho-alpha-D-ribose 1-diphosphate: step 5/9. Functionally, IGPS catalyzes the conversion of PRFAR and glutamine to IGP, AICAR and glutamate. The HisH subunit catalyzes the hydrolysis of glutamine to glutamate and ammonia as part of the synthesis of IGP and AICAR. The resulting ammonia molecule is channeled to the active site of HisF. This Desulfovibrio desulfuricans (strain ATCC 27774 / DSM 6949 / MB) protein is Imidazole glycerol phosphate synthase subunit HisH.